We begin with the raw amino-acid sequence, 168 residues long: Cell division inhibitor SulA (168 aa).

Positions 106-112 are ftsZ binding; the sequence is ALLTGNY. A lon protease binding region spans residues 161 to 168; the sequence is KIHSYLYH.

The protein belongs to the SulA family. Interacts with FtsZ. Post-translationally, is rapidly cleaved and degraded by the Lon protease once DNA damage is repaired.

Functionally, component of the SOS system and an inhibitor of cell division. Accumulation of SulA causes rapid cessation of cell division and the appearance of long, non-septate filaments. In the presence of GTP, binds a polymerization-competent form of FtsZ in a 1:1 ratio, thus inhibiting FtsZ polymerization and therefore preventing it from participating in the assembly of the Z ring. This mechanism prevents the premature segregation of damaged DNA to daughter cells during cell division. The polypeptide is Cell division inhibitor SulA (Yersinia pseudotuberculosis serotype O:1b (strain IP 31758)).